A 142-amino-acid chain; its full sequence is HTH-type transcriptional regulator MntR (142 aa).

One can recognise an HTH dtxR-type domain in the interval 1–63; that stretch reads MPTPSMEDYI…YEKYRGLVLT (63 aa). Residues Asp8, Glu11, His77, Glu99, Glu102, and His103 each contribute to the Mn(2+) site.

It belongs to the DtxR/MntR family. Homodimer.

The protein localises to the cytoplasm. DNA binding is strongly activated by Mn(2+). Its function is as follows. Central regulator of manganese homeostasis. This is HTH-type transcriptional regulator MntR from Bacillus mycoides (strain KBAB4) (Bacillus weihenstephanensis).